Consider the following 557-residue polypeptide: MAELRHSSSLGSRSSSSPLRAAGDEDSSSPHVHDHSPNGGDDEDGRPRHPSRDRDRPIWFHSLFPFFGDDPRVSPQKNKISLLLILILAIASLISVYGIINHLNAPYLCKKDGIVLNCPHVKESPSPWENPLSATTSWKPCAERRIGGISDLPPENETNGYVFIHAEGGLNQQRIAICNAVAVAKIMNATLILPVLKQDQIWKDTTKFEDIFDVDHFIDYLKDDVRIVRDIPDWFTDKAELFSSIRRTVKNIPKYAAAQFYIDNVLPRIKEKKIMALKPFVDRLGYDNVPQEINRLRCRVNYHALKFLPEIEQMADSLVSRMRNRTGNPNPYMALHLRFEKGMVGLSFCDFVGTREEKVKMAEYRQKEWPRRFKNGSHLWQLALQKRKEGRCPLEPGEVAVILRAMGYPKETQIYVASGQVYGGQNRMAPLRNMFPNLVTKEDLAGKEELTTFRKHVTSLAALDFLVCLKSDVFVMTHGGNFAKLIIGARRYMGHRQKSIKPDKGLMSKSFGDPYMGWATFVEDVVVTHQTRTGLPEETFPNYDLWENPLTPCMCKA.

Positions 1-54 (MAELRHSSSLGSRSSSSPLRAAGDEDSSSPHVHDHSPNGGDDEDGRPRHPSRDR) are disordered. Topologically, residues 1-79 (MAELRHSSSL…DPRVSPQKNK (79 aa)) are cytoplasmic. A compositionally biased stretch (low complexity) spans 7–20 (SSSLGSRSSSSPLR). Basic and acidic residues predominate over residues 45–54 (GRPRHPSRDR). The chain crosses the membrane as a helical; Signal-anchor for type II membrane protein span at residues 80–100 (ISLLLILILAIASLISVYGII). The Lumenal segment spans residues 101–557 (NHLNAPYLCK…NPLTPCMCKA (457 aa)). Residues asparagine 156, asparagine 188, and asparagine 324 are each glycosylated (N-linked (GlcNAc...) asparagine). 336–338 (HLR) contributes to the substrate binding site. The N-linked (GlcNAc...) asparagine glycan is linked to asparagine 375.

The protein belongs to the glycosyltransferase GT106 family. In terms of tissue distribution, widely expressed with the highest expression in reproductive tissues and roots.

Its subcellular location is the golgi apparatus membrane. Its pathway is glycan metabolism; pectin biosynthesis. Its function is as follows. Glycosyltransferase involved in the biosynthesis of pectic type-II arabinogalactans. The chain is Protein PECTIC ARABINOGALACTAN SYNTHESIS-RELATED from Arabidopsis thaliana (Mouse-ear cress).